A 267-amino-acid chain; its full sequence is Alkaline ceramidase 3 (267 aa).

Topologically, residues 1–33 (MAPAVDRKGYWGPTTSTLDWCEENYVVTLFVAE) are cytoplasmic. The Ca(2+) site is built by aspartate 19, tryptophan 20, glutamate 22, asparagine 24, and glutamate 33. The chain crosses the membrane as a helical span at residues 34–55 (FWNTVSNLIMIIPPIFGAIQGI). At 56–61 (RDRLEK) the chain is on the lumenal side. Residues 62 to 82 (RYIAAYLALTVVGMGSWCFHM) traverse the membrane as a helical segment. Zn(2+) is bound at residue histidine 81. Residues 83–87 (TLKYE) lie on the Cytoplasmic side of the membrane. The helical transmembrane segment at 88–108 (MQLLDELPMIYSCCIFVYCMF) threads the bilayer. At 109-118 (ECFKTKSSIN) the chain is on the lumenal side. The helical transmembrane segment at 119-139 (YHLLFTLFLYSLTVTTIYLKV) threads the bilayer. The Cytoplasmic portion of the chain corresponds to 140–141 (KE). Residues 142-162 (PIFHQVMYGMLVFTLVLRSIY) traverse the membrane as a helical segment. At 163 to 173 (IVTWVYPWLRG) the chain is on the lumenal side. Residues 174-194 (LGYTSLTVFLLGFLLWNIDNI) traverse the membrane as a helical segment. The Cytoplasmic segment spans residues 195 to 215 (FCDSLRNFRKRVPPVLGVTTQ). Residues 216-236 (FHAWWHILTGLGSYLHILFSL) traverse the membrane as a helical segment. Histidine 217 and histidine 221 together coordinate Zn(2+). Over 237–267 (YTRTLYLRYRPKVKFLFGIWPAVMFEPQRKH) the chain is Lumenal.

Belongs to the alkaline ceramidase family. It depends on Zn(2+) as a cofactor. Up-regulated with age in cerebeLlum and cerebrum.

It localises to the endoplasmic reticulum membrane. The protein localises to the golgi apparatus membrane. It carries out the reaction an N-acyl-(4R)-4-hydroxysphinganine + H2O = (4R)-hydroxysphinganine + a fatty acid. The enzyme catalyses N-(5Z,8Z,11Z,14Z-eicosatetraenoyl)-sphing-4-enine + H2O = sphing-4-enine + (5Z,8Z,11Z,14Z)-eicosatetraenoate. It catalyses the reaction N-(5Z,8Z,11Z,14Z-eicosatetraenoyl)-sphinganine + H2O = sphinganine + (5Z,8Z,11Z,14Z)-eicosatetraenoate. The catalysed reaction is N-(5Z,8Z,11Z,14Z-eicosatetraenoyl)-(4R)-hydroxysphinganine + H2O = (4R)-hydroxysphinganine + (5Z,8Z,11Z,14Z)-eicosatetraenoate. It carries out the reaction N-(11Z-eicosenoyl)-sphing-4-enine + H2O = (11Z)-eicosenoate + sphing-4-enine. The enzyme catalyses N-(11Z-eicosenoyl)-sphinganine + H2O = (11Z)-eicosenoate + sphinganine. It catalyses the reaction N-(11Z-eicosenoyl)-(4R)-hydroxysphinganine + H2O = (11Z)-eicosenoate + (4R)-hydroxysphinganine. The catalysed reaction is N-(9Z-octadecenoyl)-sphing-4-enine + H2O = sphing-4-enine + (9Z)-octadecenoate. It carries out the reaction N-(9Z-octadecenoyl)-sphinganine + H2O = sphinganine + (9Z)-octadecenoate. The enzyme catalyses N-(9Z-octadecenoyl)-(4R)-hydroxysphinganine + H2O = (4R)-hydroxysphinganine + (9Z)-octadecenoate. It catalyses the reaction an N-acylsphing-4-enine + H2O = sphing-4-enine + a fatty acid. The catalysed reaction is an N-acylsphinganine + H2O = sphinganine + a fatty acid. Its pathway is lipid metabolism; sphingolipid metabolism. Its activity is regulated as follows. Activated by Ca(2+) and inhibited by Zn(2+). Its function is as follows. Endoplasmic reticulum and Golgi ceramidase that catalyzes the hydrolysis of unsaturated long-chain C18:1-, C20:1- and C20:4-ceramides, dihydroceramides and phytoceramides into sphingoid bases like sphingosine and free fatty acids at alkaline pH. Ceramides, sphingosine, and its phosphorylated form sphingosine-1-phosphate are bioactive lipids that mediate cellular signaling pathways regulating several biological processes including cell proliferation, apoptosis and differentiation. Controls the generation of sphingosine in erythrocytes, and thereby sphingosine-1-phosphate in plasma. Through the regulation of ceramides and sphingosine-1-phosphate homeostasis in the brain may play a role in neurons survival and function. By regulating the levels of pro-inflammatory ceramides in immune cells and tissues, may modulate the inflammatory response. The protein is Alkaline ceramidase 3 (Acer3) of Mus musculus (Mouse).